The primary structure comprises 646 residues: Serine/threonine-protein kinase sck2 (646 aa).

Disordered regions lie at residues Val17–Val85 and Gly143–Thr176. Polar residues predominate over residues Ser68–Asp80. Residues Ser149–Ser165 are compositionally biased toward low complexity. The region spanning Phe266 to Phe527 is the Protein kinase domain. ATP is bound by residues Ile272 to Val280 and Lys295. Asp392 functions as the Proton acceptor in the catalytic mechanism. The 78-residue stretch at Asp528–Phe605 folds into the AGC-kinase C-terminal domain. The segment at Asn609–Pro646 is disordered. Positions Ser610–Asp621 are enriched in low complexity. Residues Asp622–Asp637 show a composition bias toward basic and acidic residues.

It belongs to the protein kinase superfamily. AGC Ser/Thr protein kinase family. PKC subfamily.

The catalysed reaction is L-seryl-[protein] + ATP = O-phospho-L-seryl-[protein] + ADP + H(+). It catalyses the reaction L-threonyl-[protein] + ATP = O-phospho-L-threonyl-[protein] + ADP + H(+). Protein kinase that is part of growth control pathway which is at least partially redundant with the cAMP pathway. This Schizosaccharomyces pombe (strain 972 / ATCC 24843) (Fission yeast) protein is Serine/threonine-protein kinase sck2 (sck2).